The primary structure comprises 299 residues: ATP phosphoribosyltransferase (299 aa).

It belongs to the ATP phosphoribosyltransferase family. Long subfamily. As to quaternary structure, equilibrium between an active dimeric form, an inactive hexameric form and higher aggregates. Interconversion between the various forms is largely reversible and is influenced by the natural substrates and inhibitors of the enzyme. It depends on Mg(2+) as a cofactor.

Its subcellular location is the cytoplasm. The catalysed reaction is 1-(5-phospho-beta-D-ribosyl)-ATP + diphosphate = 5-phospho-alpha-D-ribose 1-diphosphate + ATP. The protein operates within amino-acid biosynthesis; L-histidine biosynthesis; L-histidine from 5-phospho-alpha-D-ribose 1-diphosphate: step 1/9. Its activity is regulated as follows. Feedback inhibited by histidine. Its function is as follows. Catalyzes the condensation of ATP and 5-phosphoribose 1-diphosphate to form N'-(5'-phosphoribosyl)-ATP (PR-ATP). Has a crucial role in the pathway because the rate of histidine biosynthesis seems to be controlled primarily by regulation of HisG enzymatic activity. This is ATP phosphoribosyltransferase from Buchnera aphidicola subsp. Melaphis rhois.